We begin with the raw amino-acid sequence, 101 residues long: MNSIVNFSQQLIQNFQEVSQKTVADSSNLKAFAYLGAGLAMIGVIGVGAGQGYAAGKACDAIARNPEAQKQVFRVLVIGTAISETSSIYALLVALILIFVG.

A run of 2 helical transmembrane segments spans residues 31–51 (AFAYLGAGLAMIGVIGVGAGQ) and 81–101 (AISETSSIYALLVALILIFVG).

It belongs to the ATPase C chain family. As to quaternary structure, F-type ATPases have 2 components, F(1) - the catalytic core - and F(0) - the membrane proton channel. F(1) has five subunits: alpha(3), beta(3), gamma(1), delta(1), epsilon(1). F(0) has three main subunits: a(1), b(2) and c(10-14). The alpha and beta chains form an alternating ring which encloses part of the gamma chain. F(1) is attached to F(0) by a central stalk formed by the gamma and epsilon chains, while a peripheral stalk is formed by the delta and b chains.

The protein resides in the cell membrane. F(1)F(0) ATP synthase produces ATP from ADP in the presence of a proton or sodium gradient. F-type ATPases consist of two structural domains, F(1) containing the extramembraneous catalytic core and F(0) containing the membrane proton channel, linked together by a central stalk and a peripheral stalk. During catalysis, ATP synthesis in the catalytic domain of F(1) is coupled via a rotary mechanism of the central stalk subunits to proton translocation. Its function is as follows. Key component of the F(0) channel; it plays a direct role in translocation across the membrane. A homomeric c-ring of between 10-14 subunits forms the central stalk rotor element with the F(1) delta and epsilon subunits. The sequence is that of ATP synthase subunit c from Mesomycoplasma hyopneumoniae (strain 7448) (Mycoplasma hyopneumoniae).